A 328-amino-acid polypeptide reads, in one-letter code: DNA-directed RNA polymerase subunit alpha (328 aa).

The tract at residues 1–231 is alpha N-terminal domain (alpha-NTD); the sequence is MIYQMQMPAK…EHVTFFADFS (231 aa). Residues 252-328 are alpha C-terminal domain (alpha-CTD); that stretch reads MRKLFNTKIE…MDITKYQMKG (77 aa).

This sequence belongs to the RNA polymerase alpha chain family. As to quaternary structure, homodimer. The RNAP catalytic core consists of 2 alpha, 1 beta, 1 beta' and 1 omega subunit. When a sigma factor is associated with the core the holoenzyme is formed, which can initiate transcription.

It catalyses the reaction RNA(n) + a ribonucleoside 5'-triphosphate = RNA(n+1) + diphosphate. DNA-dependent RNA polymerase catalyzes the transcription of DNA into RNA using the four ribonucleoside triphosphates as substrates. The polypeptide is DNA-directed RNA polymerase subunit alpha (Chlorobium limicola (strain DSM 245 / NBRC 103803 / 6330)).